We begin with the raw amino-acid sequence, 425 residues long: Adenylosuccinate synthetase (425 aa).

GTP is bound by residues 12-18 (GDEGKGK) and 40-42 (GHT). The Proton acceptor role is filled by Asp-13. Mg(2+) is bound by residues Asp-13 and Gly-40. IMP is bound by residues 13–16 (DEGK), 38–41 (NAGH), Thr-127, Arg-141, Gln-222, Thr-237, and Arg-301. Catalysis depends on His-41, which acts as the Proton donor. 297–303 (AVTGRPR) contacts substrate. GTP is bound by residues Arg-303, 329-331 (KID), and 411-413 (SVG).

This sequence belongs to the adenylosuccinate synthetase family. In terms of assembly, homodimer. Mg(2+) serves as cofactor.

The protein localises to the cytoplasm. The catalysed reaction is IMP + L-aspartate + GTP = N(6)-(1,2-dicarboxyethyl)-AMP + GDP + phosphate + 2 H(+). It participates in purine metabolism; AMP biosynthesis via de novo pathway; AMP from IMP: step 1/2. Plays an important role in the de novo pathway of purine nucleotide biosynthesis. Catalyzes the first committed step in the biosynthesis of AMP from IMP. The polypeptide is Adenylosuccinate synthetase (Fusobacterium nucleatum).